The following is a 255-amino-acid chain: Pimeloyl-[acyl-carrier protein] methyl ester esterase (255 aa).

Residues Trp-18, Ser-78–Leu-79, and Phe-139–Asp-143 each bind substrate. Ser-78 acts as the Nucleophile in catalysis. Catalysis depends on residues Asp-203 and His-233. Position 233 (His-233) interacts with substrate.

It belongs to the AB hydrolase superfamily. Carboxylesterase BioH family. In terms of assembly, monomer.

Its subcellular location is the cytoplasm. It carries out the reaction 6-carboxyhexanoyl-[ACP] methyl ester + H2O = 6-carboxyhexanoyl-[ACP] + methanol + H(+). Its pathway is cofactor biosynthesis; biotin biosynthesis. The physiological role of BioH is to remove the methyl group introduced by BioC when the pimeloyl moiety is complete. It allows to synthesize pimeloyl-ACP via the fatty acid synthetic pathway through the hydrolysis of the ester bonds of pimeloyl-ACP esters. The chain is Pimeloyl-[acyl-carrier protein] methyl ester esterase from Xylella fastidiosa (strain M12).